The chain runs to 68 residues: DNA-directed RNA polymerase subunit omega (68 aa).

It belongs to the RNA polymerase subunit omega family. The RNAP catalytic core consists of 2 alpha, 1 beta, 1 beta' and 1 omega subunit. When a sigma factor is associated with the core the holoenzyme is formed, which can initiate transcription.

The enzyme catalyses RNA(n) + a ribonucleoside 5'-triphosphate = RNA(n+1) + diphosphate. In terms of biological role, promotes RNA polymerase assembly. Latches the N- and C-terminal regions of the beta' subunit thereby facilitating its interaction with the beta and alpha subunits. The polypeptide is DNA-directed RNA polymerase subunit omega (Neisseria meningitidis serogroup C (strain 053442)).